The primary structure comprises 319 residues: Succinoglycan biosynthesis protein ExoW (319 aa).

Belongs to the glycosyltransferase 2 family.

It localises to the cell membrane. The protein operates within glycan metabolism; exopolysaccharide biosynthesis. Glycosyltransferase required for the synthesis of succinoglycan (EPS I). Needed for the addition of the seventh sugar (glucose), catalyzes the formation of a beta-1,3 linkage between the seventh and eighth sugar. This chain is Succinoglycan biosynthesis protein ExoW (exoW), found in Rhizobium meliloti (strain 1021) (Ensifer meliloti).